The primary structure comprises 478 residues: Adenosylhomocysteinase (478 aa).

3 residues coordinate substrate: threonine 67, aspartate 144, and glutamate 204. 205–207 is an NAD(+) binding site; that stretch reads TTT. Substrate-binding residues include lysine 234 and aspartate 238. Residues asparagine 239, 268–273, glutamate 291, asparagine 326, 347–349, and asparagine 392 contribute to the NAD(+) site; these read GYGDVG and IGH.

It belongs to the adenosylhomocysteinase family. Requires NAD(+) as cofactor.

It localises to the cytoplasm. It carries out the reaction S-adenosyl-L-homocysteine + H2O = L-homocysteine + adenosine. Its pathway is amino-acid biosynthesis; L-homocysteine biosynthesis; L-homocysteine from S-adenosyl-L-homocysteine: step 1/1. Functionally, may play a key role in the regulation of the intracellular concentration of adenosylhomocysteine. The sequence is that of Adenosylhomocysteinase from Nitrosomonas europaea (strain ATCC 19718 / CIP 103999 / KCTC 2705 / NBRC 14298).